A 1509-amino-acid chain; its full sequence is DNA polymerase alpha catalytic subunit (1509 aa).

The interval 1-162 is disordered; sequence MNRPKREKKS…KKTKEKKNEI (162 aa). 2 stretches are compositionally biased toward basic and acidic residues: residues 21 to 35 and 42 to 79; these read EQIK…RTDQ and ERKR…RETS. Positions 27 to 67 form a coiled coil; sequence RDGEKRTDQLQEEDDERKRLEQLKEQETEFDKEERKRKNRD. Acidic residues predominate over residues 80–123; sequence DNEDEDEDEDDDGDNSDDDYSLDEDDEDGGGDGENNDSDQEEAI. Residues 127–137 show a composition bias toward basic residues; that stretch reads RKKKRQVKKKS. The span at 138-147 shows a compositional bias: basic and acidic residues; it reads KKDENGEPKV. Residues 148–157 show a composition bias toward basic residues; the sequence is KTPRVKKTKE. 2 coiled-coil regions span residues 234–263 and 958–989; these read APDS…LLNK and LHGL…IQQQ. Cysteine 1328, cysteine 1331, cysteine 1355, cysteine 1358, cysteine 1389, cysteine 1392, cysteine 1406, and cysteine 1411 together coordinate Zn(2+). The segment at 1328 to 1358 adopts a CysA-type zinc-finger fold; sequence CPYCGQNNEFTGIVKIDSEGKSESGFDCNQC. The CysB motif signature appears at 1389–1411; sequence CTECEKVSKNYKETSYRCARPQC.

This sequence belongs to the DNA polymerase type-B family.

It localises to the nucleus. It carries out the reaction DNA(n) + a 2'-deoxyribonucleoside 5'-triphosphate = DNA(n+1) + diphosphate. In terms of biological role, polymerase alpha in a complex with DNA primase is a replicative polymerase. This is DNA polymerase alpha catalytic subunit (pola1) from Dictyostelium discoideum (Social amoeba).